Reading from the N-terminus, the 135-residue chain is Small ribosomal subunit protein uS11 (135 aa).

The segment at 1-26 is disordered; that stretch reads MPPKSRTAGGARKTRRKEKKNVSHGH. Residues 12 to 23 show a composition bias toward basic residues; it reads RKTRRKEKKNVS.

It belongs to the universal ribosomal protein uS11 family. As to quaternary structure, part of the 30S ribosomal subunit. Interacts with proteins S7 and S18. Binds to IF-3.

Its function is as follows. Located on the platform of the 30S subunit, it bridges several disparate RNA helices of the 16S rRNA. Forms part of the Shine-Dalgarno cleft in the 70S ribosome. The sequence is that of Small ribosomal subunit protein uS11 from Beutenbergia cavernae (strain ATCC BAA-8 / DSM 12333 / CCUG 43141 / JCM 11478 / NBRC 16432 / NCIMB 13614 / HKI 0122).